The chain runs to 255 residues: CCAAT/enhancer-binding protein delta (255 aa).

3 disordered regions span residues 1–42 (MTCA…AAPA), 91–121 (GGPA…PGSL), and 138–206 (PAAQ…QEMQ). Residue Lys107 forms a Glycyl lysine isopeptide (Lys-Gly) (interchain with G-Cter in SUMO) linkage. Pro residues predominate over residues 141 to 161 (QPTPPASPDPPRRSPAPPAPG). Residues 163–187 (ARDKAAGKRGPDRGSPEYRQRRERN) are compositionally biased toward basic and acidic residues. The region spanning 177 to 240 (SPEYRQRRER…AGLRRFFKQL (64 aa)) is the bZIP domain. The segment at 181 to 208 (RQRRERNNIAVRKSRDKAKRRNQEMQQK) is basic motif. The tract at residues 212-240 (LSAENEKLQQRVEQLTRDLAGLRRFFKQL) is leucine-zipper.

The protein belongs to the bZIP family. C/EBP subfamily. Binds DNA as a homodimer and as a heterodimer. Can form stable heterodimers with CEBPA, CEBPB and CEBPE. Directly interacts with SPI1/PU.1; this interaction does not affect DNA-binding properties of each partner. Interacts with PRDM16.

It is found in the nucleus. Its function is as follows. Transcription activator that recognizes two different DNA motifs: the CCAAT homology common to many promoters and the enhanced core homology common to many enhancers. Important transcription factor regulating the expression of genes involved in immune and inflammatory responses. Transcriptional activator that enhances IL6 transcription alone and as heterodimer with CEBPB. This Ovis aries (Sheep) protein is CCAAT/enhancer-binding protein delta (CEBPD).